An 888-amino-acid chain; its full sequence is Prodigiosin synthesizing transferase PigC (888 aa).

It belongs to the PigC family.

It participates in antibiotic biosynthesis; prodigiosin biosynthesis. Its function is as follows. Involved in the biosynthesis of 2-methyl-3-n-amyl-pyrrole (MAP), one of the terminal products involved in the biosynthesis of the red antibiotic prodigiosin (Pig). Catalyzes the transfer of 2-methyl-3-n-amyl-pyrrole (MAP) to 4-methoxy-2,2'-bipyrrole-5-carbaldehyde (MBC) to yield prodigiosin. It is able to use substrates with a variety of monocyclic rings in place of the pyrrolic ring A of its natural substrate. The sequence is that of Prodigiosin synthesizing transferase PigC from Serratia marcescens.